Consider the following 281-residue polypeptide: Cell growth regulator with EF hand domain protein 1 (281 aa).

A signal peptide spans 1–21; that stretch reads MSRWLMQMLMLPLLLLPLGQA. EF-hand domains lie at 71 to 106 and 115 to 150; these read NREQ…ALAP and PVIL…APKR. Residues Asp-84, Asp-86, Asn-88, Gln-90, Glu-95, Asp-128, Asp-130, Asp-132, and Glu-139 each coordinate Ca(2+). The tract at residues 146–281 is disordered; it reads EAPKRAESLP…HSIQLENDEI (136 aa). A compositionally biased stretch (polar residues) spans 169 to 184; sequence LLANSPLQSETQQSLG. Residues 185 to 213 show a composition bias toward basic and acidic residues; sequence TKEEITSQVEAKRALEPEQEAGHHIETKV. A phosphoserine mark is found at Ser-217 and Ser-228. Residues 234–256 are compositionally biased toward basic and acidic residues; the sequence is GPREDAERQVESKDNEGEAKDLP.

Post-translationally, probably digested extracellularly by an unknown serine protease generating extremely hydrophobic bioactive peptides. As to expression, expressed predominantly in whole brain and kidney, with limited expression in heart, lung, liver, and skeletal muscle and no expression in spleen and testis. Also expressed in pituitary gland, adrenal gland, digestive tract, and reproductive organs.

It localises to the secreted. Mediates cell-cell adhesion in a calcium-dependent manner. Able to inhibit growth in several cell lines. This Rattus norvegicus (Rat) protein is Cell growth regulator with EF hand domain protein 1.